The following is a 209-amino-acid chain: Large ribosomal subunit protein uL3 (209 aa).

Gln-150 is subject to N5-methylglutamine.

This sequence belongs to the universal ribosomal protein uL3 family. As to quaternary structure, part of the 50S ribosomal subunit. Forms a cluster with proteins L14 and L19. In terms of processing, methylated by PrmB.

Its function is as follows. One of the primary rRNA binding proteins, it binds directly near the 3'-end of the 23S rRNA, where it nucleates assembly of the 50S subunit. This is Large ribosomal subunit protein uL3 from Buchnera aphidicola subsp. Acyrthosiphon pisum (strain 5A).